Consider the following 357-residue polypeptide: tRNA N6-adenosine threonylcarbamoyltransferase (357 aa).

His-115 and His-119 together coordinate Fe cation. Substrate is bound by residues 137–141, Asp-170, Gly-183, and Asn-281; that span reads LASGG. A Fe cation-binding site is contributed by Asp-309.

It belongs to the KAE1 / TsaD family. It depends on Fe(2+) as a cofactor.

It localises to the cytoplasm. The catalysed reaction is L-threonylcarbamoyladenylate + adenosine(37) in tRNA = N(6)-L-threonylcarbamoyladenosine(37) in tRNA + AMP + H(+). In terms of biological role, required for the formation of a threonylcarbamoyl group on adenosine at position 37 (t(6)A37) in tRNAs that read codons beginning with adenine. Is involved in the transfer of the threonylcarbamoyl moiety of threonylcarbamoyl-AMP (TC-AMP) to the N6 group of A37, together with TsaE and TsaB. TsaD likely plays a direct catalytic role in this reaction. The polypeptide is tRNA N6-adenosine threonylcarbamoyltransferase (Nitrobacter winogradskyi (strain ATCC 25391 / DSM 10237 / CIP 104748 / NCIMB 11846 / Nb-255)).